An 87-amino-acid chain; its full sequence is uncharacterized protein (87 aa).

The 2Fe-2S ferredoxin-type domain occupies 4-87 (SIIEITNIKK…KPKGNITIKI (84 aa)). Cys38, Cys43, Cys46, and Cys75 together coordinate [2Fe-2S] cluster.

The cofactor is [2Fe-2S] cluster.

This is an uncharacterized protein from Buchnera aphidicola subsp. Acyrthosiphon pisum (strain APS) (Acyrthosiphon pisum symbiotic bacterium).